The primary structure comprises 189 residues: MILIIDNYDSFTYNLAQCVGELGHDVLVCRNDEIDVVKIKKLNPEKIIISPGPGKPTESGISLDVISSLAEYIPILGVCLGHQSIGYINGGSIIKVPKIMHGKTSQIYHDREDLFINLPNPFIATRYHSLIIDRANFPTNLAVTAWTDNNIIMACRHKHYKMLRGIQFHPESLWTVCGQQLLKNFLDSD.

One can recognise a Glutamine amidotransferase type-1 domain in the interval 1–189; sequence MILIIDNYDS…QLLKNFLDSD (189 aa). 52-54 provides a ligand contact to L-glutamine; it reads GPG. Residue C79 is the Nucleophile; for GATase activity of the active site. L-glutamine-binding positions include Q83 and 129–130; that span reads SL. Catalysis depends on residues H169 and E171.

In terms of assembly, tetramer of two components I and two components II.

It localises to the plastid. Its subcellular location is the chloroplast. The catalysed reaction is chorismate + L-glutamine = anthranilate + pyruvate + L-glutamate + H(+). It participates in amino-acid biosynthesis; L-tryptophan biosynthesis; L-tryptophan from chorismate: step 1/5. This chain is Anthranilate synthase component 2 (trpG), found in Porphyra purpurea (Red seaweed).